A 179-amino-acid chain; its full sequence is Dual-action ribosomal maturation protein DarP (179 aa).

This sequence belongs to the DarP family.

The protein resides in the cytoplasm. Its function is as follows. Member of a network of 50S ribosomal subunit biogenesis factors which assembles along the 30S-50S interface, preventing incorrect 23S rRNA structures from forming. Promotes peptidyl transferase center (PTC) maturation. The chain is Dual-action ribosomal maturation protein DarP from Erwinia tasmaniensis (strain DSM 17950 / CFBP 7177 / CIP 109463 / NCPPB 4357 / Et1/99).